The primary structure comprises 120 residues: uncharacterized protein (120 aa).

The first 18 residues, 1 to 18 (MRSWIPLLVLFAVLAVFA), serve as a signal peptide directing secretion. The interval 20–99 (AGKSSESDES…GDNRVKRDGL (80 aa)) is disordered.

This is an uncharacterized protein from Caenorhabditis elegans.